Here is a 458-residue protein sequence, read N- to C-terminus: MGGPGPRRAGTSRERLVVTGRAGWMGMGRGAGRSALGFWPTLAFLLCSFPAATSPCKILKCNSEFWSATSGSHAPASDDTPEFCAALRSYALCTRRTARTCRGDLAYHSAVHGIEDLMSQHNCSKDGPTSQPRLHTLPPAGDSQERSDSPEICHCEKSFHKHSATPNYTHCGLFGDPHLRTFTDRFQTCKVQGAWPLIDNNYLNVQVTNTPVLPGSAATATSKLTIIFKNFQECVDQKVYQAEMDELPAAFVDGSKNGGDKHGANSLKITEKVSGQHVEIRAKYIGTTIVVRQVGRYLTFAVRVPEEVVNAVEDWDSQGLYLCLRGCPLNQQIDFQAFHTNTEGTGARRLAAASPAPTAPETFPYETAVAKCKEKLPVEDLYYQACVFDLLTTGDVNFTLAAYYALEDVKMLHSNKDKLHLYERTRDLPGRAAAGLPLAPQPLLGALILLLALFPVFC.

Residues 1-53 (MGGPGPRRAGTSRERLVVTGRAGWMGMGRGAGRSALGFWPTLAFLLCSFPAAT) form the signal peptide. Residues 54-176 (SPCKILKCNS…NYTHCGLFGD (123 aa)) constitute a propeptide, removed in mature form. The span at 121–133 (HNCSKDGPTSQPR) shows a compositional bias: polar residues. Residues 121-149 (HNCSKDGPTSQPRLHTLPPAGDSQERSDS) form a disordered region. Asn-122 and Asn-167 each carry an N-linked (GlcNAc...) asparagine glycan. Disulfide bonds link Cys-153-Cys-234 and Cys-171-Cys-323. An N-linked (GlcNAc...) asparagine glycan is attached at Asn-397. Ala-433 carries the GPI-anchor amidated alanine lipid modification. A propeptide spans 434 to 458 (AGLPLAPQPLLGALILLLALFPVFC) (removed in mature form).

Belongs to the repulsive guidance molecule (RGM) family. In terms of assembly, interacts with NEO1, BMP2 and BMP4. Autocatalytically cleaved at low pH; the two chains remain linked via two disulfide bonds.

Its subcellular location is the cell membrane. Functionally, member of the repulsive guidance molecule (RGM) family that performs several functions in the developing and adult nervous system. Regulates cephalic neural tube closure, inhibits neurite outgrowth and cortical neuron branching, and the formation of mature synapses. Binding to its receptor NEO1/neogenin induces activation of RHOA-ROCK1/Rho-kinase signaling pathway through UNC5B-ARHGEF12/LARG-PTK2/FAK1 cascade, leading to collapse of the neuronal growth cone and neurite outgrowth inhibition. Furthermore, RGMA binding to NEO1/neogenin leads to HRAS inactivation by influencing HRAS-PTK2/FAK1-AKT1 pathway. It also functions as a bone morphogenetic protein (BMP) coreceptor that may signal through SMAD1, SMAD5, and SMAD8. This is Repulsive guidance molecule A (RGMA) from Macaca fascicularis (Crab-eating macaque).